Here is a 106-residue protein sequence, read N- to C-terminus: MGNLFYFILAAFCEISGCYLFWLHFRSDKPALLLLPAAACLLVFAYLLTKIDTATAGRAYAVYGGIYIVCSLAWMYGIEKFSPDIWDYIGVGICLIGASVILFAPR.

4 helical membrane passes run 5–25 (FYFI…WLHF), 31–51 (ALLL…LTKI), 59–79 (AYAV…YGIE), and 85–105 (IWDY…LFAP).

Belongs to the UPF0060 family.

It localises to the cell inner membrane. This is UPF0060 membrane protein CHU_3331 from Cytophaga hutchinsonii (strain ATCC 33406 / DSM 1761 / CIP 103989 / NBRC 15051 / NCIMB 9469 / D465).